The primary structure comprises 370 residues: Sphingosine 1-phosphate receptor 2 (370 aa).

Residues 1 to 57 (MTTCRLFAGFCQAVTMSKYSQYFNKTLIQVHYLTAKEMTAEELRDRIESKQSLSSLN) are Extracellular-facing. Residue Asn-24 is glycosylated (N-linked (GlcNAc...) asparagine). The chain crosses the membrane as a helical span at residues 58–78 (ILFVVICSIIILENLLVLIAV). Topologically, residues 79 to 87 (FRNKKFHSA) are cytoplasmic. The helical transmembrane segment at 88–108 (MFFFIGNLAFSDLLAGSAYIA) threads the bilayer. The Extracellular segment spans residues 109 to 128 (NIFLSGPRTFHLTPVQWFIR). Residues 129–149 (EGTAFIALSASVFSLLAIAIE) traverse the membrane as a helical segment. At 150–167 (RYIAITKVKVYGSNKTCR) the chain is on the cytoplasmic side. A helical membrane pass occupies residues 168–193 (MFLLIGACWVMSILLGGLPIIGWNCI). Residues 194–219 (NNLDDCSAVLPLNTRYYIRFVVTIFS) lie on the Extracellular side of the membrane. The helical transmembrane segment at 220-230 (IILLSIVILYV) threads the bilayer. Residues 231-254 (RIYLIVRTSHQEATNSPAYALLKT) are Cytoplasmic-facing. The helical transmembrane segment at 255-275 (VTIVLGVFIICWLPAFTILLL) threads the bilayer. Residues 276-289 (DTSCKMKQCPILNN) are Extracellular-facing. The chain crosses the membrane as a helical span at residues 290–310 (AGIFFSFATLNSALNPLIYTL). Residues 311–370 (RSKDMRKEFLRVLCCWGLLNCGRPPHRCMVPLKSSSSMEHCTNKHEHQSIPIMQDCTTCV) lie on the Cytoplasmic side of the membrane. Cys-325 carries S-palmitoyl cysteine lipidation.

It belongs to the G-protein coupled receptor 1 family.

Its subcellular location is the cell membrane. In terms of biological role, receptor for the lysosphingolipid sphingosine 1-phosphate (S1P). S1P receptor is critical for cell migration and epithelial integrity during vertebrate embryogenesis. Receptor for the chemokine-like protein FAM19A5. Mediates the inhibitory effect of FAM19A5 on vascular smooth muscle cell proliferation and migration. The sequence is that of Sphingosine 1-phosphate receptor 2 (s1pr2) from Danio rerio (Zebrafish).